The following is a 423-amino-acid chain: D-tagatose-1,6-bisphosphate aldolase subunit GatZ (423 aa).

The protein belongs to the GatZ/KbaZ family. GatZ subfamily. Forms a complex with GatY.

Its pathway is carbohydrate metabolism; D-tagatose 6-phosphate degradation; D-glyceraldehyde 3-phosphate and glycerone phosphate from D-tagatose 6-phosphate: step 2/2. In terms of biological role, component of the tagatose-1,6-bisphosphate aldolase GatYZ that is required for full activity and stability of the Y subunit. Could have a chaperone-like function for the proper and stable folding of GatY. When expressed alone, GatZ does not show any aldolase activity. Is involved in the catabolism of galactitol. The sequence is that of D-tagatose-1,6-bisphosphate aldolase subunit GatZ from Salmonella dublin (strain CT_02021853).